Reading from the N-terminus, the 292-residue chain is Protease HtpX (292 aa).

The next 2 helical transmembrane spans lie at 4-24 (IILF…ILAV) and 32-52 (IYGL…LSLI). Histidine 139 serves as a coordination point for Zn(2+). Residue glutamate 140 is part of the active site. Residue histidine 143 coordinates Zn(2+). 2 helical membrane passes run 150–170 (ITMT…SRII) and 193–213 (FLFF…ASII). Glutamate 222 contributes to the Zn(2+) binding site.

This sequence belongs to the peptidase M48B family. Requires Zn(2+) as cofactor.

Its subcellular location is the cell membrane. This is Protease HtpX from Buchnera aphidicola subsp. Schizaphis graminum (strain Sg).